A 289-amino-acid chain; its full sequence is Phosphatidylserine decarboxylase proenzyme (289 aa).

Active-site charge relay system; for autoendoproteolytic cleavage activity residues include D89, H146, and S252. S252 functions as the Schiff-base intermediate with substrate; via pyruvic acid; for decarboxylase activity in the catalytic mechanism. S252 carries the post-translational modification Pyruvic acid (Ser); by autocatalysis.

The protein belongs to the phosphatidylserine decarboxylase family. PSD-B subfamily. Prokaryotic type I sub-subfamily. As to quaternary structure, heterodimer of a large membrane-associated beta subunit and a small pyruvoyl-containing alpha subunit. Requires pyruvate as cofactor. In terms of processing, is synthesized initially as an inactive proenzyme. Formation of the active enzyme involves a self-maturation process in which the active site pyruvoyl group is generated from an internal serine residue via an autocatalytic post-translational modification. Two non-identical subunits are generated from the proenzyme in this reaction, and the pyruvate is formed at the N-terminus of the alpha chain, which is derived from the carboxyl end of the proenzyme. The autoendoproteolytic cleavage occurs by a canonical serine protease mechanism, in which the side chain hydroxyl group of the serine supplies its oxygen atom to form the C-terminus of the beta chain, while the remainder of the serine residue undergoes an oxidative deamination to produce ammonia and the pyruvoyl prosthetic group on the alpha chain. During this reaction, the Ser that is part of the protease active site of the proenzyme becomes the pyruvoyl prosthetic group, which constitutes an essential element of the active site of the mature decarboxylase.

It localises to the cell membrane. It catalyses the reaction a 1,2-diacyl-sn-glycero-3-phospho-L-serine + H(+) = a 1,2-diacyl-sn-glycero-3-phosphoethanolamine + CO2. The protein operates within phospholipid metabolism; phosphatidylethanolamine biosynthesis; phosphatidylethanolamine from CDP-diacylglycerol: step 2/2. Functionally, catalyzes the formation of phosphatidylethanolamine (PtdEtn) from phosphatidylserine (PtdSer). This is Phosphatidylserine decarboxylase proenzyme from Shewanella putrefaciens (strain CN-32 / ATCC BAA-453).